Here is a 56-residue protein sequence, read N- to C-terminus: Large ribosomal subunit protein bL32 (56 aa).

The span at 1–16 (MAVQKNRKTRSKRGMR) shows a compositional bias: basic residues. Residues 1–37 (MAVQKNRKTRSKRGMRRSHDALGTATMSVDSTSGETH) form a disordered region. A compositionally biased stretch (polar residues) spans 25-35 (ATMSVDSTSGE).

This sequence belongs to the bacterial ribosomal protein bL32 family.

In Pseudoalteromonas atlantica (strain T6c / ATCC BAA-1087), this protein is Large ribosomal subunit protein bL32.